The sequence spans 422 residues: Adhesin YadA (422 aa).

Positions 1-25 (MTKDFKISVSAALISALFSSPYAFA) are cleaved as a signal peptide. The tract at residues 26–330 (NNDEVHFTAV…KKAIRESNQY (305 aa)) is surface exposed passenger domain. Positions 216 to 362 (EKTQENANKK…LASSAALNSL (147 aa)) form a coiled coil. Residues 331-369 (TDHKFHQLDNRLDKLDTRVDKGLASSAALNSLFQPYGVG) are outer membrane translocation of the passenger domain. 4 beta stranded membrane passes run 369–379 (GKVNFTAGVGG), 383–394 (SQALAIGSGYRV), 401–407 (KAGVAYA), and 411–422 (DVMYNASFNIEW). Residues 370 to 422 (KVNFTAGVGGYRSSQALAIGSGYRVNESVALKAGVAYAGSSDVMYNASFNIEW) form a translocator domain region.

It belongs to the autotransporter-2 (AT-2) (TC 1.B.40) family. Homotrimer.

It localises to the cell surface. It is found in the cell outer membrane. Its function is as follows. Collagen-binding outer membrane protein forming a fibrillar matrix on the bacterial cell surface. Promotes initial attachment and invasion of eukaryotic cells. Also protects the bacteria by being responsible for agglutination, serum resistance, complement inactivation and phagocytosis resistance. The protein is Adhesin YadA (yadA) of Yersinia enterocolitica.